Reading from the N-terminus, the 249-residue chain is Small ribosomal subunit protein uS3 (249 aa).

The KH type-2 domain occupies 39–109 (IRTYVLARLK…EVKIDVVEVV (71 aa)). The span at 226-239 (KERRNDAGARNRDS) shows a compositional bias: basic and acidic residues. The interval 226–249 (KERRNDAGARNRDSRTKRRHRTKR) is disordered. The segment covering 240-249 (RTKRRHRTKR) has biased composition (basic residues).

The protein belongs to the universal ribosomal protein uS3 family. Part of the 30S ribosomal subunit. Forms a tight complex with proteins S10 and S14.

Binds the lower part of the 30S subunit head. Binds mRNA in the 70S ribosome, positioning it for translation. This is Small ribosomal subunit protein uS3 from Pelodictyon phaeoclathratiforme (strain DSM 5477 / BU-1).